The primary structure comprises 431 residues: Acrosin (431 aa).

Residues 1 to 16 (MLPTAVLLVLVVSVVA) form the signal peptide. N-linked (GlcNAc...) asparagine glycosylation is present at asparagine 19. 6 cysteine pairs are disulfide-bonded: cysteine 22-cysteine 152, cysteine 26-cysteine 160, cysteine 71-cysteine 87, cysteine 175-cysteine 244, cysteine 207-cysteine 223, and cysteine 234-cysteine 264. The Peptidase S1 domain occupies 40–288 (VVGGQAAQQG…FLDWIASRIG (249 aa)). Residues histidine 86 and aspartate 140 each act as charge relay system in the active site. The N-linked (GlcNAc...) asparagine glycan is linked to asparagine 208. Catalysis depends on serine 238, which acts as the Charge relay system. The interval 295–385 (IQPATPTPPT…PPPASTKPPQ (91 aa)) is disordered. Residues 331–341 (PHPHPHPHPHP) show a composition bias toward basic residues. The span at 342 to 381 (RPPQPPAAQAPPPPPPPPPPPPPPPPPPPPPPPPPPPAST) shows a compositional bias: pro residues. The propeptide at 351–431 (APPPPPPPPP…TEIPEVTLAS (81 aa)) is pro-rich.

Belongs to the peptidase S1 family. As to quaternary structure, heavy chain (catalytic) and a light chain linked by two disulfide bonds. Forms a heterodimer with SERPINA5.

The enzyme catalyses Preferential cleavage: Arg-|-Xaa, Lys-|-Xaa.. Inhibited by SERPINA5. In terms of biological role, acrosin is the major protease of mammalian spermatozoa. It is a serine protease of trypsin-like cleavage specificity, it is synthesized in a zymogen form, proacrosin and stored in the acrosome. The polypeptide is Acrosin (ACR) (Oryctolagus cuniculus (Rabbit)).